The sequence spans 180 residues: UPF0149 protein XCV3523 (180 aa).

Belongs to the UPF0149 family.

This chain is UPF0149 protein XCV3523, found in Xanthomonas euvesicatoria pv. vesicatoria (strain 85-10) (Xanthomonas campestris pv. vesicatoria).